We begin with the raw amino-acid sequence, 385 residues long: Methylthioribose-1-phosphate isomerase (385 aa).

The Proton donor role is filled by Asp-256.

Belongs to the eIF-2B alpha/beta/delta subunits family. MtnA subfamily.

Its subcellular location is the cytoplasm. The protein localises to the nucleus. It carries out the reaction 5-(methylsulfanyl)-alpha-D-ribose 1-phosphate = 5-(methylsulfanyl)-D-ribulose 1-phosphate. It functions in the pathway amino-acid biosynthesis; L-methionine biosynthesis via salvage pathway; L-methionine from S-methyl-5-thio-alpha-D-ribose 1-phosphate: step 1/6. Catalyzes the interconversion of methylthioribose-1-phosphate (MTR-1-P) into methylthioribulose-1-phosphate (MTRu-1-P). The protein is Methylthioribose-1-phosphate isomerase of Arthroderma otae (strain ATCC MYA-4605 / CBS 113480) (Microsporum canis).